We begin with the raw amino-acid sequence, 317 residues long: MTTQLDSLRNMTVVVADTGDIDAIKKYQPQDATTNPSLILSASALPQYAPLIDEAVAYAKAQSNDKAQQLIDAEDKLAVNIGLEILKIVPGRISTEVDARLSYNTQATVEKARKLIALYNAAGISNDRILIKIASTWQGIRAAEILEKEGINCNLTLLFSEAQARACAEAGVYLISPFVGRILDWYKANSDKKEYAPAEDPGVISVTKIYNYYKEYGYNTVVMGASFRNVGEITELAGCDRLTIAPALLKELQENSTALIRKLEYKGEVKAKPQPLTEAEFYWQHNSDAMAVEKLAEGIRKFAIDQEKLETMLSAKL.

K132 serves as the catalytic Schiff-base intermediate with substrate.

Belongs to the transaldolase family. Type 1 subfamily. Homodimer.

Its subcellular location is the cytoplasm. The catalysed reaction is D-sedoheptulose 7-phosphate + D-glyceraldehyde 3-phosphate = D-erythrose 4-phosphate + beta-D-fructose 6-phosphate. It participates in carbohydrate degradation; pentose phosphate pathway; D-glyceraldehyde 3-phosphate and beta-D-fructose 6-phosphate from D-ribose 5-phosphate and D-xylulose 5-phosphate (non-oxidative stage): step 2/3. Functionally, transaldolase is important for the balance of metabolites in the pentose-phosphate pathway. This chain is Transaldolase, found in Haemophilus influenzae (strain 86-028NP).